The primary structure comprises 365 residues: Phosphoserine aminotransferase (365 aa).

R40 serves as a coordination point for L-glutamate. Residues A74–S75, F99, T155, D177, and Q200 contribute to the pyridoxal 5'-phosphate site. K201 bears the N6-(pyridoxal phosphate)lysine mark. N241–T242 is a binding site for pyridoxal 5'-phosphate.

It belongs to the class-V pyridoxal-phosphate-dependent aminotransferase family. SerC subfamily. In terms of assembly, homodimer. Pyridoxal 5'-phosphate is required as a cofactor.

It localises to the cytoplasm. It carries out the reaction O-phospho-L-serine + 2-oxoglutarate = 3-phosphooxypyruvate + L-glutamate. The enzyme catalyses 4-(phosphooxy)-L-threonine + 2-oxoglutarate = (R)-3-hydroxy-2-oxo-4-phosphooxybutanoate + L-glutamate. The protein operates within amino-acid biosynthesis; L-serine biosynthesis; L-serine from 3-phospho-D-glycerate: step 2/3. Catalyzes the reversible conversion of 3-phosphohydroxypyruvate to phosphoserine and of 3-hydroxy-2-oxo-4-phosphonooxybutanoate to phosphohydroxythreonine. The sequence is that of Phosphoserine aminotransferase from Lactococcus lactis subsp. cremoris (strain SK11).